A 121-amino-acid polypeptide reads, in one-letter code: Ribosome-binding factor A (121 aa).

Belongs to the RbfA family. As to quaternary structure, monomer. Binds 30S ribosomal subunits, but not 50S ribosomal subunits or 70S ribosomes.

The protein localises to the cytoplasm. Functionally, one of several proteins that assist in the late maturation steps of the functional core of the 30S ribosomal subunit. Associates with free 30S ribosomal subunits (but not with 30S subunits that are part of 70S ribosomes or polysomes). Required for efficient processing of 16S rRNA. May interact with the 5'-terminal helix region of 16S rRNA. In Clostridium novyi (strain NT), this protein is Ribosome-binding factor A.